A 276-amino-acid chain; its full sequence is Release factor glutamine methyltransferase (276 aa).

Residues 116–120 (GTGTG), Asp-139, Trp-167, and Asn-182 each bind S-adenosyl-L-methionine. A substrate-binding site is contributed by 182 to 185 (NPPY).

It belongs to the protein N5-glutamine methyltransferase family. PrmC subfamily.

It carries out the reaction L-glutaminyl-[peptide chain release factor] + S-adenosyl-L-methionine = N(5)-methyl-L-glutaminyl-[peptide chain release factor] + S-adenosyl-L-homocysteine + H(+). In terms of biological role, methylates the class 1 translation termination release factors RF1/PrfA and RF2/PrfB on the glutamine residue of the universally conserved GGQ motif. The sequence is that of Release factor glutamine methyltransferase from Pseudomonas aeruginosa (strain ATCC 15692 / DSM 22644 / CIP 104116 / JCM 14847 / LMG 12228 / 1C / PRS 101 / PAO1).